We begin with the raw amino-acid sequence, 82 residues long: MIRIEILFDRQSTKNLKSGTLQALQNEIEQRLKPHYPEIWLRIDQGSAPSVSVTGARNDKDKERILSLLEEIWQDDSWLPAA.

It belongs to the DinI family.

Functionally, the imp operon is involved in UV protection and mutation, however the ImpC protein is not essential for these functions. The protein is Protein ImpC (impC) of Salmonella typhimurium.